Here is a 422-residue protein sequence, read N- to C-terminus: Phagosome assembly factor 1 (422 aa).

It belongs to the PHAF1 family. In terms of assembly, interacts with BCAS3; the interaction is requrired for the association with the phagophore.

It is found in the cytoplasm. It localises to the preautophagosomal structure. Functionally, plays a regulatory role in autophagic activity. In complex with BCAS3, associates with the autophagosome formation site during both non-selective and selective autophagy. This chain is Phagosome assembly factor 1, found in Homo sapiens (Human).